The primary structure comprises 613 residues: Leucine-rich repeat receptor-like protein FASCIATED EAR2 (613 aa).

The signal sequence occupies residues 1–28 (MLTATPLPHQLLATFLLVLASATQPAVP). The Extracellular portion of the chain corresponds to 29-573 (ASTDRAALLA…WLGGWHGENG (545 aa)). LRR repeat units lie at residues 79-103 (TPSV…PLAL), 104-128 (LRRL…LPRS), 130-150 (LALD…LPSS), 151-176 (LPAL…SFPA), 178-199 (LAAL…IVAD), 202-226 (NSAL…IAAV), 227-250 (RSLQ…IGNL), 251-274 (TYLQ…LAGC), 276-297 (QLLY…ELDA), 298-322 (LASL…LAGC), 324-346 (SLEV…VAKW), 347-370 (LSLK…MFSF), 372-394 (LLQW…GFNV), 435-459 (VQAT…LVDM), 460-483 (KGLE…LGGM), 484-507 (GRLH…IAAM), and 508-531 (TVLE…KFPG). The N-linked (GlcNAc...) asparagine glycan is linked to N91. N158 carries an N-linked (GlcNAc...) asparagine glycan. An N-linked (GlcNAc...) asparagine glycan is attached at N249. N393 carries an N-linked (GlcNAc...) asparagine glycan. N-linked (GlcNAc...) asparagine glycosylation occurs at N466. An N-linked (GlcNAc...) asparagine glycan is attached at N514. A helical membrane pass occupies residues 574-597 (WVSLGAFCISTMTSFYVSLATLLC). Residues 598-613 (SSNARNFVFRPVRVEY) lie on the Cytoplasmic side of the membrane.

In terms of tissue distribution, expressed in ear primordia, vegetative apex and young leaf tissues. Barely detected in expanded leaf tissues and not expressed in roots.

The protein localises to the cell membrane. Its function is as follows. Receptor-like protein that regulates shoot meristem proliferation. Based on additive and synergistic phenotypes of double mutants, it is probable that unlike CLV1 and CLV2 in A.thaliana, FAE2 and TD1 do not function exclusively in a single pathway. The polypeptide is Leucine-rich repeat receptor-like protein FASCIATED EAR2 (FEA2) (Zea mays (Maize)).